A 160-amino-acid polypeptide reads, in one-letter code: MPSFDIVSEVKMNEVLNAVDNANRELATRFDFRGVEASFELNKEEVKLEADADFQLKQMVEILRAALLKRNIENSSMDVGDSVHSGKRFHLTVKFKQGIDKEVAKKLVKLIKDSKIKVQAAIQGDEVRVTGKKRDDLQETMALVRGAELGQPMQFQNFRD.

This sequence belongs to the YajQ family.

Nucleotide-binding protein. The polypeptide is Nucleotide-binding protein AHA_1129 (Aeromonas hydrophila subsp. hydrophila (strain ATCC 7966 / DSM 30187 / BCRC 13018 / CCUG 14551 / JCM 1027 / KCTC 2358 / NCIMB 9240 / NCTC 8049)).